The following is a 316-amino-acid chain: Lipoyl synthase (316 aa).

Positions 61, 66, 72, 87, 91, 94, and 301 each coordinate [4Fe-4S] cluster. The region spanning 73 to 290 (FGKGTATFMI…ERAAIEMGFS (218 aa)) is the Radical SAM core domain.

This sequence belongs to the radical SAM superfamily. Lipoyl synthase family. It depends on [4Fe-4S] cluster as a cofactor.

It localises to the cytoplasm. The enzyme catalyses [[Fe-S] cluster scaffold protein carrying a second [4Fe-4S](2+) cluster] + N(6)-octanoyl-L-lysyl-[protein] + 2 oxidized [2Fe-2S]-[ferredoxin] + 2 S-adenosyl-L-methionine + 4 H(+) = [[Fe-S] cluster scaffold protein] + N(6)-[(R)-dihydrolipoyl]-L-lysyl-[protein] + 4 Fe(3+) + 2 hydrogen sulfide + 2 5'-deoxyadenosine + 2 L-methionine + 2 reduced [2Fe-2S]-[ferredoxin]. The protein operates within protein modification; protein lipoylation via endogenous pathway; protein N(6)-(lipoyl)lysine from octanoyl-[acyl-carrier-protein]: step 2/2. Functionally, catalyzes the radical-mediated insertion of two sulfur atoms into the C-6 and C-8 positions of the octanoyl moiety bound to the lipoyl domains of lipoate-dependent enzymes, thereby converting the octanoylated domains into lipoylated derivatives. The sequence is that of Lipoyl synthase from Nitrosospira multiformis (strain ATCC 25196 / NCIMB 11849 / C 71).